The chain runs to 505 residues: Geissoschizine oxidase (505 aa).

The chain crosses the membrane as a helical span at residues 9 to 29; the sequence is FSSPAFFLLLPFLFLLIKPLI. Heme is bound at residue C443.

This sequence belongs to the cytochrome P450 family. Requires heme as cofactor. As to expression, mainly expressed in roots.

It localises to the membrane. The enzyme catalyses (19E)-geissoschizine + reduced [NADPH--hemoprotein reductase] + O2 = akuammicine + formate + oxidized [NADPH--hemoprotein reductase] + H2O + H(+). It catalyses the reaction (19E)-geissoschizine + reduced [NADPH--hemoprotein reductase] + O2 = 3,17-didehydrostemmadenine + oxidized [NADPH--hemoprotein reductase] + 2 H2O. It carries out the reaction 3,17-didehydrostemmadenine = 17-dehydropreakuammicine. It participates in alkaloid biosynthesis. In terms of biological role, monooxygenase involved in the biosynthesis of curare monoterpene indole alkaloids (MIAs), natural products such as strychnine, a neurotoxic compound used as a pesticide to control rodents, and its pharmacologically active derivatives, including brucine, used to regulate blood pressure. Curare alkaloids act as animal glycine receptor antagonists. Catalyzes the conversion of geissoschizine to dehydropreakuammicine by cyclization, which is spontaneously converted into akuammicine by aromatization. The polypeptide is Geissoschizine oxidase (Strychnos nux-vomica (Poison nut)).